Consider the following 308-residue polypeptide: 15-cis-phytoene synthase (308 aa).

It belongs to the phytoene/squalene synthase family. ATP serves as cofactor. Mn(2+) is required as a cofactor. The cofactor is Mg(2+).

The catalysed reaction is 2 (2E,6E,10E)-geranylgeranyl diphosphate = 15-cis-phytoene + 2 diphosphate. It functions in the pathway carotenoid biosynthesis; phytoene biosynthesis. In terms of biological role, involved in the biosynthesis of carotenoids. Catalyzes the condensation of two molecules of geranylgeranyl diphosphate (GGPP) to give prephytoene diphosphate (PPPP) and the subsequent rearrangement of the cyclopropylcarbinyl intermediate to yield 15-cis-phytoene. The protein is 15-cis-phytoene synthase (crtB) of Synechococcus elongatus (strain ATCC 33912 / PCC 7942 / FACHB-805) (Anacystis nidulans R2).